Here is a 197-residue protein sequence, read N- to C-terminus: Cerebellin-3 (197 aa).

The signal sequence occupies residues 1–24; the sequence is MGTEWHKPKLSLALVLLTLEAGWA. The region spanning 59–197 is the C1q domain; the sequence is APPGRVAFAA…SFSGFLIFPL (139 aa). The tract at residues 64–197 is necessary for interaction with CBLN3, and homotrimerization; that stretch reads VAFAAVRSHH…SFSGFLIFPL (134 aa). Asn82 is a glycosylation site (N-linked (GlcNAc...) asparagine).

In terms of assembly, heterohexamer; disulfide-linked heterotrimers. Interacts with CBLN1. May also form oligomers with CBLN2 and CBLN4. In terms of tissue distribution, expressed in brain, restricted to the cerebellar cortex. Within the cerebellum, expressed in granule layers (at protein level). Also detected in postsynaptic Purkinje cell spines (at protein level).

It is found in the endoplasmic reticulum. Its subcellular location is the golgi apparatus. The protein localises to the cis-Golgi network. It localises to the secreted. The protein resides in the synapse. In terms of biological role, may be involved in synaptic functions in the CNS. In Mus musculus (Mouse), this protein is Cerebellin-3 (Cbln3).